A 355-amino-acid polypeptide reads, in one-letter code: Erythronate-4-phosphate dehydrogenase (355 aa).

Substrate-binding residues include Ser-45 and Thr-66. Asp-146 serves as a coordination point for NAD(+). The active site involves Arg-206. Position 229 (Asp-229) interacts with NAD(+). Glu-234 is a catalytic residue. The Proton donor role is filled by His-251. Position 254 (Gly-254) interacts with NAD(+). Tyr-255 serves as a coordination point for substrate.

The protein belongs to the D-isomer specific 2-hydroxyacid dehydrogenase family. PdxB subfamily. Homodimer.

It localises to the cytoplasm. It carries out the reaction 4-phospho-D-erythronate + NAD(+) = (R)-3-hydroxy-2-oxo-4-phosphooxybutanoate + NADH + H(+). It participates in cofactor biosynthesis; pyridoxine 5'-phosphate biosynthesis; pyridoxine 5'-phosphate from D-erythrose 4-phosphate: step 2/5. In terms of biological role, catalyzes the oxidation of erythronate-4-phosphate to 3-hydroxy-2-oxo-4-phosphonooxybutanoate. The polypeptide is Erythronate-4-phosphate dehydrogenase (Acinetobacter baumannii (strain ATCC 17978 / DSM 105126 / CIP 53.77 / LMG 1025 / NCDC KC755 / 5377)).